Reading from the N-terminus, the 84-residue chain is LYR motif-containing protein 5B (84 aa).

It belongs to the complex I LYR family.

This is LYR motif-containing protein 5B (lyrm5b) from Danio rerio (Zebrafish).